The primary structure comprises 909 residues: Phosphoenolpyruvate carboxylase (909 aa).

Active-site residues include H138 and K572.

It belongs to the PEPCase type 1 family. The cofactor is Mg(2+).

The enzyme catalyses oxaloacetate + phosphate = phosphoenolpyruvate + hydrogencarbonate. Functionally, forms oxaloacetate, a four-carbon dicarboxylic acid source for the tricarboxylic acid cycle. The chain is Phosphoenolpyruvate carboxylase from Lactobacillus delbrueckii subsp. bulgaricus (strain ATCC 11842 / DSM 20081 / BCRC 10696 / JCM 1002 / NBRC 13953 / NCIMB 11778 / NCTC 12712 / WDCM 00102 / Lb 14).